Reading from the N-terminus, the 392-residue chain is MLPPGADSVVVRHGDVGVKSSHVQSDMERTLRDNVAAMLADRGVPGDVEREWGRVLVRSPAPGRAADAAADTFGVVSASPAVSVAPDLDAISDALAAAARAHYDGGAFAVDARRAGTHDFDSHDVNRVGGDAVWAAVEDDFQPVVDLDDPDITFFVEVRDAEAFVFLTHRDGPGGMPLGTQQPLVALVSGGIDSPVAAWESMRRGAPVIPLYLALGDYGGPDHRARAEAAVRTLDDYAPNHDLSLRVAPAGDAIDRLAAATGRTRMLSFRRFMYRVAEHVAEHAGAAGIVTGEAVGQKSSQTTANLGVVDRATTLPVHRPLLTWDKQRITAAARSIDTFRDSSLDVGCNRLAPRQPLTAAPIESVRADEPDALFEWARAVAADTGPVEVAVA.

The THUMP domain maps to 63 to 169 (GRAADAAADT…DAEAFVFLTH (107 aa)). Residues 187 to 188 (LV), Arg-270, Gly-292, and Gln-301 contribute to the ATP site.

The protein belongs to the ThiI family.

It is found in the cytoplasm. The catalysed reaction is [ThiI sulfur-carrier protein]-S-sulfanyl-L-cysteine + a uridine in tRNA + 2 reduced [2Fe-2S]-[ferredoxin] + ATP + H(+) = [ThiI sulfur-carrier protein]-L-cysteine + a 4-thiouridine in tRNA + 2 oxidized [2Fe-2S]-[ferredoxin] + AMP + diphosphate. It carries out the reaction [ThiS sulfur-carrier protein]-C-terminal Gly-Gly-AMP + S-sulfanyl-L-cysteinyl-[cysteine desulfurase] + AH2 = [ThiS sulfur-carrier protein]-C-terminal-Gly-aminoethanethioate + L-cysteinyl-[cysteine desulfurase] + A + AMP + 2 H(+). It functions in the pathway cofactor biosynthesis; thiamine diphosphate biosynthesis. Its function is as follows. Catalyzes the ATP-dependent transfer of a sulfur to tRNA to produce 4-thiouridine in position 8 of tRNAs, which functions as a near-UV photosensor. Also catalyzes the transfer of sulfur to the sulfur carrier protein ThiS, forming ThiS-thiocarboxylate. This is a step in the synthesis of thiazole, in the thiamine biosynthesis pathway. The sulfur is donated as persulfide by IscS. The polypeptide is Probable tRNA sulfurtransferase (Halobacterium salinarum (strain ATCC 29341 / DSM 671 / R1)).